Here is a 118-residue protein sequence, read N- to C-terminus: MTNIIETVDLTDLVGLCATDDVAEGEILRVKLPSGHALAIYCVNGEFFATDDICSHGEASLSEDGSLDGYEVECSWHFGRFDIRTGHACAMPCEHPLRSWPVTVEGGQIFVDVGAHPV.

Residues 14–111 enclose the Rieske domain; it reads VGLCATDDVA…VTVEGGQIFV (98 aa). The [2Fe-2S] cluster site is built by Cys-54, His-56, Cys-74, and His-77.

Belongs to the bacterial ring-hydroxylating dioxygenase ferredoxin component family. In terms of assembly, the p-cumate 2,3-dioxygenase multicomponent enzyme system is composed of an electron transfer component and a dioxygenase component (iron sulfur protein (ISP)). The electron transfer component is composed of a ferredoxin reductase (CmtAa) and a ferredoxin (CmtAd), and the dioxygenase component is formed of a large alpha subunit (CmtAb) and a small beta subunit (CmtAc). [2Fe-2S] cluster serves as cofactor.

It participates in aromatic compound metabolism; p-cumate degradation; acetaldehyde and pyruvate from p-cumate. In terms of biological role, component of the p-cumate 2,3-dioxygenase multicomponent enzyme system which catalyzes the incorporation of both atoms of molecular oxygen into p-cumate to form cis-2,3-dihydroxy-2,3-dihydro-p-cumate. Functions as an intermediate electron transfer protein via a specific interaction with iron sulfur protein components (ISP)(CmtAb and CmtAc). This is p-cumate 2,3-dioxygenase system, ferredoxin component from Pseudomonas putida (Arthrobacter siderocapsulatus).